A 34-amino-acid polypeptide reads, in one-letter code: Photosystem II reaction center protein M (34 aa).

The chain crosses the membrane as a helical span at residues 7–27 (GFLATLLFVAVPMLFLIGLYI).

Belongs to the PsbM family. PSII is composed of 1 copy each of membrane proteins PsbA, PsbB, PsbC, PsbD, PsbE, PsbF, PsbH, PsbI, PsbJ, PsbK, PsbL, PsbM, PsbT, PsbX, PsbY, Psb30/Ycf12, peripheral proteins PsbO, CyanoQ (PsbQ), PsbU, PsbV and a large number of cofactors. It forms dimeric complexes.

Its subcellular location is the cellular thylakoid membrane. Its function is as follows. One of the components of the core complex of photosystem II (PSII). PSII is a light-driven water:plastoquinone oxidoreductase that uses light energy to abstract electrons from H(2)O, generating O(2) and a proton gradient subsequently used for ATP formation. It consists of a core antenna complex that captures photons, and an electron transfer chain that converts photonic excitation into a charge separation. This subunit is found at the monomer-monomer interface. In Prochlorococcus marinus (strain MIT 9303), this protein is Photosystem II reaction center protein M.